Reading from the N-terminus, the 145-residue chain is Lipoprotein signal peptidase (145 aa).

3 helical membrane passes run 1–21 (MVYIVVLIVILLDQMVKLLVM), 57–77 (YLFIVITVVVISFLLIYYYKT), and 79–99 (GSGMVTLSTGLIIGGALGNLI). Residues Asp-109 and Asp-123 contribute to the active site. Residues 115–135 (IWPVFNLADSSVVIGAALLIL) form a helical membrane-spanning segment.

This sequence belongs to the peptidase A8 family.

Its subcellular location is the cell inner membrane. The catalysed reaction is Release of signal peptides from bacterial membrane prolipoproteins. Hydrolyzes -Xaa-Yaa-Zaa-|-(S,diacylglyceryl)Cys-, in which Xaa is hydrophobic (preferably Leu), and Yaa (Ala or Ser) and Zaa (Gly or Ala) have small, neutral side chains.. The protein operates within protein modification; lipoprotein biosynthesis (signal peptide cleavage). In terms of biological role, this protein specifically catalyzes the removal of signal peptides from prolipoproteins. The polypeptide is Lipoprotein signal peptidase (Halothermothrix orenii (strain H 168 / OCM 544 / DSM 9562)).